A 207-amino-acid polypeptide reads, in one-letter code: Ribosomal RNA small subunit methyltransferase G (207 aa).

S-adenosyl-L-methionine is bound by residues glycine 76, glutamine 81, 127 to 128, and arginine 141; that span reads VE.

This sequence belongs to the methyltransferase superfamily. RNA methyltransferase RsmG family.

The protein resides in the cytoplasm. The enzyme catalyses guanosine(527) in 16S rRNA + S-adenosyl-L-methionine = N(7)-methylguanosine(527) in 16S rRNA + S-adenosyl-L-homocysteine. Functionally, specifically methylates the N7 position of guanine in position 527 of 16S rRNA. The polypeptide is Ribosomal RNA small subunit methyltransferase G (Neisseria meningitidis serogroup B (strain ATCC BAA-335 / MC58)).